The sequence spans 456 residues: Anthranilate synthase component 1 (456 aa).

Residues Ser-31 and 244 to 246 (SYM) each bind L-tryptophan. 279 to 280 (GT) serves as a coordination point for chorismate. Glu-306 contributes to the Mg(2+) binding site. Residues Tyr-394, Arg-414, 428–430 (GAG), and Gly-430 each bind chorismate. Glu-443 lines the Mg(2+) pocket.

This sequence belongs to the anthranilate synthase component I family. In terms of assembly, heterotetramer consisting of two non-identical subunits: a beta subunit (TrpG) and a large alpha subunit (TrpE). It depends on Mg(2+) as a cofactor.

It carries out the reaction chorismate + L-glutamine = anthranilate + pyruvate + L-glutamate + H(+). Its pathway is amino-acid biosynthesis; L-tryptophan biosynthesis; L-tryptophan from chorismate: step 1/5. With respect to regulation, feedback inhibited by tryptophan. Its function is as follows. Part of a heterotetrameric complex that catalyzes the two-step biosynthesis of anthranilate, an intermediate in the biosynthesis of L-tryptophan. In the first step, the glutamine-binding beta subunit (TrpG) of anthranilate synthase (AS) provides the glutamine amidotransferase activity which generates ammonia as a substrate that, along with chorismate, is used in the second step, catalyzed by the large alpha subunit of AS (TrpE) to produce anthranilate. In the absence of TrpG, TrpE can synthesize anthranilate directly from chorismate and high concentrations of ammonia. The chain is Anthranilate synthase component 1 (trpE) from Lactococcus lactis subsp. lactis (strain IL1403) (Streptococcus lactis).